Here is a 514-residue protein sequence, read N- to C-terminus: Peptide chain release factor 3 (514 aa).

The 261-residue stretch at 8–268 folds into the tr-type G domain; it reads KKRRTFAIIS…TFLEFAPEPH (261 aa). Residues 17 to 24, 85 to 89, and 139 to 142 each bind GTP; these read SHPDAGKT, DTPGH, and NKLD.

Belongs to the TRAFAC class translation factor GTPase superfamily. Classic translation factor GTPase family. PrfC subfamily.

The protein resides in the cytoplasm. Functionally, increases the formation of ribosomal termination complexes and stimulates activities of RF-1 and RF-2. It binds guanine nucleotides and has strong preference for UGA stop codons. It may interact directly with the ribosome. The stimulation of RF-1 and RF-2 is significantly reduced by GTP and GDP, but not by GMP. This chain is Peptide chain release factor 3, found in Streptococcus pyogenes serotype M1.